Consider the following 1026-residue polypeptide: Multidrug resistance protein MdtC (1026 aa).

11 consecutive transmembrane segments (helical) span residues 15–35 (ILIA…LPVA), 333–353 (EVEE…FLFL), 360–380 (LIPA…MYLC), 387–407 (LSLM…IVVL), 431–451 (VGFT…PLLL), 463–483 (FAVT…TLTP), 528–548 (LVGV…IAIP), 853–873 (LILI…LYES), 897–917 (LFNA…IGIV), 953–973 (PIMM…LSGG), and 984–1004 (ITIV…TPVV).

This sequence belongs to the resistance-nodulation-cell division (RND) (TC 2.A.6) family. MdtC subfamily. In terms of assembly, part of a tripartite efflux system composed of MdtA, MdtB and MdtC. MdtC forms a heteromultimer with MdtB.

The protein localises to the cell inner membrane. This chain is Multidrug resistance protein MdtC, found in Salmonella schwarzengrund (strain CVM19633).